Here is a 507-residue protein sequence, read N- to C-terminus: Probable Xaa-Pro aminopeptidase TRV_02643 (507 aa).

Positions 275, 286, 434, and 478 each coordinate Mn(2+).

Belongs to the peptidase M24B family. Mn(2+) serves as cofactor.

The enzyme catalyses Release of any N-terminal amino acid, including proline, that is linked to proline, even from a dipeptide or tripeptide.. Catalyzes the removal of a penultimate prolyl residue from the N-termini of peptides. The polypeptide is Probable Xaa-Pro aminopeptidase TRV_02643 (Trichophyton verrucosum (strain HKI 0517)).